Reading from the N-terminus, the 136-residue chain is Large ribosomal subunit protein uL16 (136 aa).

This sequence belongs to the universal ribosomal protein uL16 family. Part of the 50S ribosomal subunit.

Binds 23S rRNA and is also seen to make contacts with the A and possibly P site tRNAs. The sequence is that of Large ribosomal subunit protein uL16 from Bradyrhizobium diazoefficiens (strain JCM 10833 / BCRC 13528 / IAM 13628 / NBRC 14792 / USDA 110).